The sequence spans 490 residues: Cytochrome P450 2W1 (490 aa).

Positions 1 to 22 (MALLLLLFLGLLGLWGLLCACA) are cleaved as a signal peptide. N-linked (GlcNAc...) asparagine glycosylation is present at N177. Heme is bound at residue C433.

Belongs to the cytochrome P450 family. The cofactor is heme. In terms of tissue distribution, very low levels are detected in fetal and adult tissues. Highly expressed in several tumor samples, in particular colon and adrenal tumors.

The protein resides in the endoplasmic reticulum lumen. The protein localises to the cell membrane. It is found in the microsome membrane. The catalysed reaction is all-trans-retinoate + reduced [NADPH--hemoprotein reductase] + O2 = all-trans-4-hydroxyretinoate + oxidized [NADPH--hemoprotein reductase] + H2O + H(+). It carries out the reaction 1-(9Z-octadecenoyl)-sn-glycero-3-phosphocholine + reduced [NADPH--hemoprotein reductase] + O2 = 1-[8-hydroxy-(9Z)-octadecenoyl]-sn-glycero-3-phosphocholine + oxidized [NADPH--hemoprotein reductase] + H2O + H(+). It catalyses the reaction 1-(9Z-octadecenoyl)-sn-glycero-3-phosphocholine + reduced [NADPH--hemoprotein reductase] + O2 = 1-[11-hydroxy-(9Z)-octadecenoyl]-sn-glycero-3-phosphocholine + oxidized [NADPH--hemoprotein reductase] + H2O + H(+). The enzyme catalyses 1-(9Z-octadecenoyl)-sn-glycero-3-phosphocholine + reduced [NADPH--hemoprotein reductase] + O2 = 1-[(9S,10R)-epoxy-octadecanoyl]-sn-glycero-3-phosphocholine + oxidized [NADPH--hemoprotein reductase] + H2O + H(+). The catalysed reaction is 1-(9Z-octadecenoyl)-sn-glycero-3-phosphocholine + reduced [NADPH--hemoprotein reductase] + O2 = 1-[(9R,10S)-epoxy-octadecanoyl]-sn-glycero-3-phosphocholine + oxidized [NADPH--hemoprotein reductase] + H2O + H(+). Its function is as follows. A cytochrome P450 monooxygenase that may play a role in retinoid and phospholipid metabolism. Catalyzes the hydroxylation of saturated carbon hydrogen bonds. Hydroxylates all trans-retinoic acid (atRA) to 4-hydroxyretinoate and may regulate atRA clearance. Other retinoids such as all-trans retinol and all-trans retinal are potential endogenous substrates. Catalyzes both epoxidation of double bonds and hydroxylation of carbon hydrogen bonds of the fatty acyl chain of 1-acylphospholipids/2-lysophospholipids. Can metabolize various lysophospholipids classes including lysophosphatidylcholines (LPCs), lysophosphatidylinositols (LPIs), lysophosphatidylserines (LPSs), lysophosphatidylglycerols (LPGs), lysophosphatidylethanolamines (LPEs) and lysophosphatidic acids (LPAs). Has low or no activity toward 2-acylphospholipids/1-lysophospholipids, diacylphospholipids and free fatty acids. May play a role in tumorigenesis by activating procarcinogens such as aflatoxin B1, polycyclic aromatic hydrocarbon dihydrodiols and aromatic amines. Mechanistically, uses molecular oxygen inserting one oxygen atom into a substrate, and reducing the second into a water molecule, with two electrons provided by NADPH via cytochrome P450 reductase (CPR; NADPH-ferrihemoprotein reductase). The polypeptide is Cytochrome P450 2W1 (Homo sapiens (Human)).